The primary structure comprises 93 residues: Large ribosomal subunit protein uL23cz/uL23cy (93 aa).

The protein belongs to the universal ribosomal protein uL23 family. As to quaternary structure, part of the 50S ribosomal subunit.

The protein resides in the plastid. It localises to the chloroplast. In terms of biological role, binds to 23S rRNA. The chain is Large ribosomal subunit protein uL23cz/uL23cy (rpl23-A) from Lotus japonicus (Lotus corniculatus var. japonicus).